Reading from the N-terminus, the 209-residue chain is Orotate phosphoribosyltransferase (209 aa).

Residues Arg-96, Lys-100, His-102, and 122–130 contribute to the 5-phospho-alpha-D-ribose 1-diphosphate site; that span reads EDLISTGGS. Ser-126 provides a ligand contact to orotate.

This sequence belongs to the purine/pyrimidine phosphoribosyltransferase family. PyrE subfamily. In terms of assembly, homodimer. The cofactor is Mg(2+).

It carries out the reaction orotidine 5'-phosphate + diphosphate = orotate + 5-phospho-alpha-D-ribose 1-diphosphate. It functions in the pathway pyrimidine metabolism; UMP biosynthesis via de novo pathway; UMP from orotate: step 1/2. Functionally, catalyzes the transfer of a ribosyl phosphate group from 5-phosphoribose 1-diphosphate to orotate, leading to the formation of orotidine monophosphate (OMP). The polypeptide is Orotate phosphoribosyltransferase (Streptococcus thermophilus (strain ATCC BAA-491 / LMD-9)).